A 337-amino-acid polypeptide reads, in one-letter code: Ketol-acid reductoisomerase (NADP(+)) (337 aa).

Residues 2–182 (AKIFYDNDAD…GATRAGVLLT (181 aa)) form the KARI N-terminal Rossmann domain. Residues 25–28 (YGSQ), Ser51, Ser53, and 83–86 (DTSQ) contribute to the NADP(+) site. The active site involves His108. Gly134 contacts NADP(+). Positions 183 to 328 (TFAEETETDL…ANLRKMMPFI (146 aa)) constitute a KARI C-terminal knotted domain. Positions 191, 195, 227, and 231 each coordinate Mg(2+). Ser252 contacts substrate.

This sequence belongs to the ketol-acid reductoisomerase family. It depends on Mg(2+) as a cofactor.

It catalyses the reaction (2R)-2,3-dihydroxy-3-methylbutanoate + NADP(+) = (2S)-2-acetolactate + NADPH + H(+). The catalysed reaction is (2R,3R)-2,3-dihydroxy-3-methylpentanoate + NADP(+) = (S)-2-ethyl-2-hydroxy-3-oxobutanoate + NADPH + H(+). It functions in the pathway amino-acid biosynthesis; L-isoleucine biosynthesis; L-isoleucine from 2-oxobutanoate: step 2/4. Its pathway is amino-acid biosynthesis; L-valine biosynthesis; L-valine from pyruvate: step 2/4. In terms of biological role, involved in the biosynthesis of branched-chain amino acids (BCAA). Catalyzes an alkyl-migration followed by a ketol-acid reduction of (S)-2-acetolactate (S2AL) to yield (R)-2,3-dihydroxy-isovalerate. In the isomerase reaction, S2AL is rearranged via a Mg-dependent methyl migration to produce 3-hydroxy-3-methyl-2-ketobutyrate (HMKB). In the reductase reaction, this 2-ketoacid undergoes a metal-dependent reduction by NADPH to yield (R)-2,3-dihydroxy-isovalerate. The sequence is that of Ketol-acid reductoisomerase (NADP(+)) from Sorangium cellulosum (strain So ce56) (Polyangium cellulosum (strain So ce56)).